Reading from the N-terminus, the 532-residue chain is tRNA-2-methylthio-N(6)-dimethylallyladenosine synthase 2 (532 aa).

The tract at residues 1 to 21 (MTSTVAHGAGSAGPADDAEPM) is disordered. The MTTase N-terminal domain maps to 24–140 (RTYQVRTYGC…LPALLDRARH (117 aa)). The [4Fe-4S] cluster site is built by C33, C69, C103, C177, C181, and C184. Positions 163 to 399 (RESAYAAWVS…VELQEQISLE (237 aa)) constitute a Radical SAM core domain. Positions 402–470 (RAIVGQRVEL…PHHLIADGGI (69 aa)) constitute a TRAM domain. Positions 510–532 (TSCGSAGGCGSADGAGSSAGDPQ) are disordered. Positions 523–532 (GAGSSAGDPQ) are enriched in low complexity.

The protein belongs to the methylthiotransferase family. MiaB subfamily. In terms of assembly, monomer. [4Fe-4S] cluster serves as cofactor.

It localises to the cytoplasm. It carries out the reaction N(6)-dimethylallyladenosine(37) in tRNA + (sulfur carrier)-SH + AH2 + 2 S-adenosyl-L-methionine = 2-methylsulfanyl-N(6)-dimethylallyladenosine(37) in tRNA + (sulfur carrier)-H + 5'-deoxyadenosine + L-methionine + A + S-adenosyl-L-homocysteine + 2 H(+). Functionally, catalyzes the methylthiolation of N6-(dimethylallyl)adenosine (i(6)A), leading to the formation of 2-methylthio-N6-(dimethylallyl)adenosine (ms(2)i(6)A) at position 37 in tRNAs that read codons beginning with uridine. The protein is tRNA-2-methylthio-N(6)-dimethylallyladenosine synthase 2 of Mycobacterium marinum (strain ATCC BAA-535 / M).